A 153-amino-acid polypeptide reads, in one-letter code: Ribosome maturation factor RimP (153 aa).

It belongs to the RimP family.

The protein localises to the cytoplasm. In terms of biological role, required for maturation of 30S ribosomal subunits. The sequence is that of Ribosome maturation factor RimP from Desulforamulus reducens (strain ATCC BAA-1160 / DSM 100696 / MI-1) (Desulfotomaculum reducens).